Consider the following 267-residue polypeptide: Small ribosomal subunit protein uS5 (267 aa).

The disordered stretch occupies residues 1 to 37; sequence MADEAPARSGFRGGFGSRGGRGGRGRGRGRWARGRGK. Over residues 11 to 20 the composition is skewed to gly residues; the sequence is FRGGFGSRGG. Residues 21-34 show a composition bias toward basic residues; the sequence is RGGRGRGRGRWARG. A Phosphoserine modification is found at serine 60. Positions 85–148 constitute an S5 DRBM domain; that stretch reads LKDEVLKIMP…ILAKLSVVPV (64 aa).

This sequence belongs to the universal ribosomal protein uS5 family.

Its function is as follows. Component of the ribosome, a large ribonucleoprotein complex responsible for the synthesis of proteins in the cell. The small ribosomal subunit (SSU) binds messenger RNAs (mRNAs) and translates the encoded message by selecting cognate aminoacyl-transfer RNA (tRNA) molecules. The large subunit (LSU) contains the ribosomal catalytic site termed the peptidyl transferase center (PTC), which catalyzes the formation of peptide bonds, thereby polymerizing the amino acids delivered by tRNAs into a polypeptide chain. The nascent polypeptides leave the ribosome through a tunnel in the LSU and interact with protein factors that function in enzymatic processing, targeting, and the membrane insertion of nascent chains at the exit of the ribosomal tunnel. Plays a role in the assembly and function of the 40S ribosomal subunit. Mutations in this protein affects the control of translational fidelity. Involved in nucleolar processing of pre-18S ribosomal RNA and ribosome assembly. Has a specific developmental role during oogenesis. The polypeptide is Small ribosomal subunit protein uS5 (RpS2) (Drosophila melanogaster (Fruit fly)).